Reading from the N-terminus, the 308-residue chain is Glutaminase (308 aa).

Residues Ser66, Asn117, Glu161, Asn168, Tyr192, Tyr244, and Val262 each coordinate substrate.

This sequence belongs to the glutaminase family. In terms of assembly, homotetramer.

It carries out the reaction L-glutamine + H2O = L-glutamate + NH4(+). In Klebsiella pneumoniae (strain 342), this protein is Glutaminase.